The chain runs to 293 residues: 33 kDa chaperonin (293 aa).

Intrachain disulfides connect cysteine 238/cysteine 240 and cysteine 271/cysteine 274.

The protein belongs to the HSP33 family. In terms of processing, under oxidizing conditions two disulfide bonds are formed involving the reactive cysteines. Under reducing conditions zinc is bound to the reactive cysteines and the protein is inactive.

It is found in the cytoplasm. In terms of biological role, redox regulated molecular chaperone. Protects both thermally unfolding and oxidatively damaged proteins from irreversible aggregation. Plays an important role in the bacterial defense system toward oxidative stress. The chain is 33 kDa chaperonin from Staphylococcus epidermidis (strain ATCC 35984 / DSM 28319 / BCRC 17069 / CCUG 31568 / BM 3577 / RP62A).